A 662-amino-acid chain; its full sequence is 72 kDa type IV collagenase (662 aa).

The N-terminal stretch at 1 to 29 is a signal peptide; the sequence is MEARVAWGALAGPLRVLCVLCCLLGRAIA. The propeptide at 30–109 is activation peptide; sequence APSPIIKFPG…PRCGNPDVAN (80 aa). The Cysteine switch signature appears at 100–107; that stretch reads PRCGNPDV. Cysteine 102 contributes to the Zn(2+) binding site. The collagenase-like 1 stretch occupies residues 110–221; sequence YNFFPRKPKW…LWTLGEGQVV (112 aa). Aspartate 134 and aspartate 168 together coordinate Ca(2+). Positions 178 and 180 each coordinate Zn(2+). Ca(2+) is bound by residues aspartate 185 and glycine 186. Histidine 193 is a Zn(2+) binding site. The Ca(2+) site is built by glycine 200, glycine 202, and aspartate 204. Residue histidine 206 participates in Zn(2+) binding. Aspartate 208, aspartate 209, and glutamate 211 together coordinate Ca(2+). The interval 222-396 is collagen-binding; the sequence is RVKYGNADGE…WGFCPDQGYS (175 aa). Fibronectin type-II domains are found at residues 228-276, 286-334, and 344-392; these read ADGE…FCPH, ADGQ…FCPE, and SEGA…FCPD. 6 cysteine pairs are disulfide-bonded: cysteine 233–cysteine 259, cysteine 247–cysteine 274, cysteine 291–cysteine 317, cysteine 305–cysteine 332, cysteine 349–cysteine 375, and cysteine 363–cysteine 390. A collagenase-like 2 region spans residues 397–467; that stretch reads LFLVAAHEFG…GPTPTLGPVT (71 aa). Residue histidine 403 coordinates Zn(2+). The active site involves glutamate 404. Histidine 407 and histidine 413 together coordinate Zn(2+). A required for inhibitor TIMP2 binding region spans residues 414–662; sequence SQDPGALMAP…GSIKSDWLGC (249 aa). Residues 446–465 form a disordered region; that stretch reads GPSPDADTDTGTGPTPTLGP. A disulfide bridge connects residues cysteine 471 and cysteine 662. Hemopexin repeat units lie at residues 474–518, 519–565, 567–615, and 616–662; these read DIVF…WPEL, PEKI…GLPP, VQQV…WNAI, and PDNL…WLGC. Ca(2+) contacts are provided by aspartate 478, aspartate 523, and aspartate 571. Asparagine 575 carries N-linked (GlcNAc...) asparagine glycosylation. Aspartate 620 serves as a coordination point for Ca(2+). The N-linked (GlcNAc...) asparagine glycan is linked to asparagine 644.

It belongs to the peptidase M10A family. As to quaternary structure, interacts (via the C-terminal hemopexin-like domains-containing region) with the integrin alpha-V/beta-3; the interaction promotes vascular invasion in angiogenic vessels and melamoma cells. Interacts (via the C-terminal PEX domain) with TIMP2 (via the C-terminal); the interaction inhibits the degradation activity. Interacts with GSK3B. The cofactor is Ca(2+). It depends on Zn(2+) as a cofactor. Post-translationally, phosphorylation on multiple sites modulates enzymatic activity. Phosphorylated by PKC in vitro. The propeptide is processed by MMP14 (MT-MMP1) and MMP16 (MT-MMP3). Autocatalytic cleavage in the C-terminal produces the anti-angiogenic peptide, PEX. This processing appears to be facilitated by binding integrinv/beta3.

It localises to the secreted. The protein localises to the extracellular space. Its subcellular location is the extracellular matrix. It is found in the membrane. The protein resides in the nucleus. It localises to the cytoplasm. The protein localises to the mitochondrion. It catalyses the reaction Cleavage of gelatin type I and collagen types IV, V, VII, X. Cleaves the collagen-like sequence Pro-Gln-Gly-|-Ile-Ala-Gly-Gln.. Functionally, ubiquitinous metalloproteinase that is involved in diverse functions such as remodeling of the vasculature, angiogenesis, tissue repair, tumor invasion, inflammation, and atherosclerotic plaque rupture. As well as degrading extracellular matrix proteins, can also act on several nonmatrix proteins such as big endothelial 1 and beta-type CGRP promoting vasoconstriction. Also cleaves KISS at a Gly-|-Leu bond. Appears to have a role in myocardial cell death pathways. Contributes to myocardial oxidative stress by regulating the activity of GSK3beta. Cleaves GSK3beta in vitro. Involved in the formation of the fibrovascular tissues. Its function is as follows. PEX, the C-terminal non-catalytic fragment of MMP2, possesses anti-angiogenic and anti-tumor properties and inhibits cell migration and cell adhesion to FGF2 and vitronectin. Ligand for integrin alpha-v/beta-3 on the surface of blood vessels. In terms of biological role, mediates the proteolysis of CHUK/IKKA and initiates a primary innate immune response by inducing mitochondrial-nuclear stress signaling with activation of the pro-inflammatory NF-kappaB, NFAT and IRF transcriptional pathways. In Mus musculus (Mouse), this protein is 72 kDa type IV collagenase (Mmp2).